A 255-amino-acid chain; its full sequence is Hydroxyacylglutathione hydrolase (255 aa).

H55, H57, D59, H60, H113, D132, and H170 together coordinate Zn(2+).

The protein belongs to the metallo-beta-lactamase superfamily. Glyoxalase II family. As to quaternary structure, monomer. It depends on Zn(2+) as a cofactor.

The enzyme catalyses an S-(2-hydroxyacyl)glutathione + H2O = a 2-hydroxy carboxylate + glutathione + H(+). It functions in the pathway secondary metabolite metabolism; methylglyoxal degradation; (R)-lactate from methylglyoxal: step 2/2. Functionally, thiolesterase that catalyzes the hydrolysis of S-D-lactoyl-glutathione to form glutathione and D-lactic acid. This chain is Hydroxyacylglutathione hydrolase, found in Methylobacterium sp. (strain 4-46).